We begin with the raw amino-acid sequence, 117 residues long: Large ribosomal subunit protein eL8 (117 aa).

This sequence belongs to the eukaryotic ribosomal protein eL8 family. In terms of assembly, part of the 50S ribosomal subunit. Part of the RNase P complex.

The protein resides in the cytoplasm. It carries out the reaction Endonucleolytic cleavage of RNA, removing 5'-extranucleotides from tRNA precursor.. Its function is as follows. Multifunctional RNA-binding protein that recognizes the K-turn motif in ribosomal RNA, the RNA component of RNase P, box H/ACA, box C/D and box C'/D' sRNAs. Part of ribonuclease P, a protein complex that generates mature tRNA molecules by cleaving their 5'-ends, this subunit dramatically stimulates RNase P activity. The chain is Large ribosomal subunit protein eL8 from Methanococcus maripaludis (strain DSM 14266 / JCM 13030 / NBRC 101832 / S2 / LL).